Here is a 136-residue protein sequence, read N- to C-terminus: Small ribosomal subunit protein bS6 (136 aa).

A disordered region spans residues 96–136 (VTEPSALARSGSDAEADRAPADEGSVEAAGAEPGSEAEAEA).

This sequence belongs to the bacterial ribosomal protein bS6 family.

Binds together with bS18 to 16S ribosomal RNA. The protein is Small ribosomal subunit protein bS6 of Methylococcus capsulatus (strain ATCC 33009 / NCIMB 11132 / Bath).